Reading from the N-terminus, the 690-residue chain is Long-chain fatty acid transport protein 5 (690 aa).

Over 1–30 (MGVRQQLALLLLLLLLLWGLGQPVWPVAVA) the chain is Cytoplasmic. 2 helical membrane-spanning segments follow: residues 31 to 51 (LTLR…LAML) and 56 to 76 (LGPW…LTLL). The Cytoplasmic segment spans residues 77 to 690 (PARLPPGLRW…QAVCEGTWRL (614 aa)). 292 to 303 (FIYTSGTTGLPK) is an AMP binding site. The residue at position 501 (Ser-501) is a Phosphoserine.

It belongs to the ATP-dependent AMP-binding enzyme family. Predominantly expressed in liver.

The protein localises to the endoplasmic reticulum membrane. It localises to the microsome. It is found in the cell membrane. The enzyme catalyses a fatty acid(in) = a fatty acid(out). The catalysed reaction is cholate + ATP + CoA = choloyl-CoA + AMP + diphosphate. It carries out the reaction chenodeoxycholate + ATP + CoA = chenodeoxycholoyl-CoA + AMP + diphosphate. It catalyses the reaction deoxycholate + ATP + CoA = deoxycholoyl-CoA + AMP + diphosphate. The enzyme catalyses lithocholate + ATP + CoA = lithocholoyl-CoA + AMP + diphosphate. The catalysed reaction is (25R)-3alpha,7alpha,12alpha-trihydroxy-5beta-cholestan-26-oate + ATP + CoA = (25R)-3alpha,7alpha,12alpha-trihydroxy-5beta-cholestan-26-oyl-CoA + AMP + diphosphate. It carries out the reaction a very long-chain fatty acid + ATP + CoA = a very long-chain fatty acyl-CoA + AMP + diphosphate. It catalyses the reaction tetracosanoate + ATP + CoA = tetracosanoyl-CoA + AMP + diphosphate. The enzyme catalyses hexacosanoate + ATP + CoA = hexacosanoyl-CoA + AMP + diphosphate. The catalysed reaction is a long-chain fatty acid + ATP + CoA = a long-chain fatty acyl-CoA + AMP + diphosphate. It carries out the reaction octadecanoate + ATP + CoA = octadecanoyl-CoA + AMP + diphosphate. It catalyses the reaction eicosanoate + ATP + CoA = eicosanoyl-CoA + AMP + diphosphate. Its activity is regulated as follows. 3-alpha,7-alpha,12-alpha-trihydroxy-5-beta-cholestanate (THCA) inhibits the activation of cholate. In terms of biological role, may mediate the import of long-chain fatty acids (LCFA) by facilitating their transport across cell membranes. Also catalyzes the ATP-dependent formation of fatty acyl-CoA using LCFA and very-long-chain fatty acids (VLCFA) as substrates. Mainly functions as a bile acyl-CoA synthetase catalyzing the activation of bile acids via ATP-dependent formation of bile acid CoA thioesters which is necessary for their subsequent conjugation with glycine or taurine. Both primary bile acids (cholic acid and chenodeoxycholic acid) and secondary bile acids (deoxycholic acid and lithocholic acid) are the principal substrates. In vitro, activates 3-alpha,7-alpha,12-alpha-trihydroxy-5-beta-cholestanate ((25R)-3alpha,7alpha,12alpha-trihydroxy-5beta-cholestan-26-oate or THCA), the C27 precursor of cholic acid deriving from the de novo synthesis from cholesterol. Plays an important role in hepatic fatty acid uptake and bile acid reconjugation and recycling but not in de novo synthesis of bile acids. This Homo sapiens (Human) protein is Long-chain fatty acid transport protein 5 (SLC27A5).